Reading from the N-terminus, the 363-residue chain is Flagellar P-ring protein 2 (363 aa).

The N-terminal stretch at 1–20 (MKRIVLLLMSVALFSTAAQA) is a signal peptide.

It belongs to the FlgI family. In terms of assembly, the basal body constitutes a major portion of the flagellar organelle and consists of four rings (L,P,S, and M) mounted on a central rod.

It localises to the periplasm. The protein resides in the bacterial flagellum basal body. Its function is as follows. Assembles around the rod to form the L-ring and probably protects the motor/basal body from shearing forces during rotation. In Vibrio parahaemolyticus serotype O3:K6 (strain RIMD 2210633), this protein is Flagellar P-ring protein 2 (flgI2).